A 1203-amino-acid polypeptide reads, in one-letter code: MSEVKLTPEQNEAIHSSGKNILVSASAGSGKTFVMAQRIVEKVKQGIEIDRLFISTFTKKAASELRMRLERDLKKARQESSDDEEAHRLTLALHNLSNADIGTMDSFTQKLTKANFNRVNIDPNFRILADQTESDLIRQEVFEQLVESYLSADESLNISKDKFEKLIKNFSKDRNILGFQKVVYTIYRFASATENPISWLENQFLKGFETYKSLTDLSEDFTVNVKENLLTFFELLENSLTNGVIAKKGAGRDKANLILDNKNELLEAISKKDFVTFTALFLSIDTDIRVGSSKDETLSALKKDFSAQKQDLVGSKSKPGELRKFVDKIKHGQLIEKYQKQAFEIASDLQKFIIEFYKTYLERKKNENAFEYSDIAHFAIEILEENPDIRENLREHYDEIMIDEYQDTSHTQERMLELLSNGHNLFMVGDIKQSIYGFRLADPGLFLEKYKSYDQAENPNQLIRLKENFRSRGEVLNFTNDIFKHLMDEKLGEMTYGKEKALVQGNISDYPVEAEKDFYPELLLYKENTSEEEIEDSEVKISDGEIKGAAQEIKKLIESGVEPKDIAILVRSKSNNNKIEDILLSYDIPVILDEGRVDFLKSMEVLIMLDILRAIDNPLYDLSLVAMLRSPLFGFNEDELTRISVQGSRDLRFWDKILLSLKKEGKNPELINLSLEQKLKAFNQKFTEWRKLVNQIPIHRLLWKIYTETYYFDYVGALKNGEMRQANLQALSVRAESYESSGYKGLFKFVRLINKFMEQNNDLASVNIKLPQNAVRVMTFHKSKGLEFDYVFLMNLQSRFNDRDLKEDVILSREHGLGMKYIADLKAEPDVITDFPYALVKMETFPYMVNKDLKQRAALSEEMRVLYVAFTRAKKKLYLVGKIKDTDKKAGLELYDTATLEGKILSDKFRNSSRGFQHWILALQNATKLPMKLNVYTKDELETEKLEFTSQPDFKKLVEESEKFDNIMSFSDEIKEAQKIMNYQYPHQAATELSSIQTPSQVKKRSYEKQLQVGEVQPVSEFVRVKNLDFSDFGSKKITAAEIGSATHSFMQYADFSQADLFSFQATLDEMGFDEKIKNQIDITKILTLFDTEFGKFLSENVDKTVKEAPFSMLRTDEFAKEQYIVRGICDGFVKIADKIILFDYKTDRFTNVSAISEIKERYKDQMNLYSEALQKAYHVNQIDKYLILLGGPRKVFVEKLDD.

A UvrD-like helicase ATP-binding domain is found at 4–472 (VKLTPEQNEA…IRLKENFRSR (469 aa)). An ATP-binding site is contributed by 25–32 (ASAGSGKT). The region spanning 503–785 (VQGNISDYPV…RVMTFHKSKG (283 aa)) is the UvrD-like helicase C-terminal domain.

The protein belongs to the helicase family. AddA subfamily. In terms of assembly, heterodimer of AddA and AddB/RexB. Mg(2+) is required as a cofactor.

The enzyme catalyses Couples ATP hydrolysis with the unwinding of duplex DNA by translocating in the 3'-5' direction.. It carries out the reaction ATP + H2O = ADP + phosphate + H(+). Its function is as follows. The heterodimer acts as both an ATP-dependent DNA helicase and an ATP-dependent, dual-direction single-stranded exonuclease. Recognizes the chi site generating a DNA molecule suitable for the initiation of homologous recombination. The AddA nuclease domain is required for chi fragment generation; this subunit has the helicase and 3' -&gt; 5' nuclease activities. This is ATP-dependent helicase/nuclease subunit A from Lactococcus lactis subsp. cremoris (strain SK11).